The following is a 120-amino-acid chain: Glutamate--tRNA ligase (120 aa).

The protein belongs to the class-I aminoacyl-tRNA synthetase family. Glutamate--tRNA ligase type 1 subfamily. Monomer.

The protein resides in the cytoplasm. It carries out the reaction tRNA(Glu) + L-glutamate + ATP = L-glutamyl-tRNA(Glu) + AMP + diphosphate. Functionally, catalyzes the attachment of glutamate to tRNA(Glu) in a two-step reaction: glutamate is first activated by ATP to form Glu-AMP and then transferred to the acceptor end of tRNA(Glu). In Staphylococcus xylosus, this protein is Glutamate--tRNA ligase (gltX).